The following is a 202-amino-acid chain: CASP-like protein 2B1 (202 aa).

The Cytoplasmic portion of the chain corresponds to 1-29; it reads MSYLGVGVSPGNVPVYHGTNLKVVDRRVR. The helical transmembrane segment at 30 to 50 threads the bilayer; it reads LAELVLRCVICGLGILAAVLV. Residues 51–72 are Extracellular-facing; the sequence is GTDTQVKVIFTIQKKAKFTDMK. The helical transmembrane segment at 73–93 threads the bilayer; that stretch reads ALVFLVIANGIAAAYSLIQGL. The Cytoplasmic portion of the chain corresponds to 94 to 109; it reads RCVVSMVRGSVLFSKP. Residues 110-130 form a helical membrane-spanning segment; sequence LAWAIFSGDQVIAYLTLAAVA. Residues 131-164 lie on the Extracellular side of the membrane; sequence AAAQSSVFGEFGQPELQWMKICNMYGKFCNQVGE. The chain crosses the membrane as a helical span at residues 165-185; it reads GIVSAVGVSLSMVILSGISAF. The Cytoplasmic portion of the chain corresponds to 186-202; sequence SLFRLYGGNKGTSGGRW.

The protein belongs to the Casparian strip membrane proteins (CASP) family. Homodimer and heterodimers.

It localises to the cell membrane. The polypeptide is CASP-like protein 2B1 (Vitis vinifera (Grape)).